Here is a 1306-residue protein sequence, read N- to C-terminus: Kinesin-like protein KIN-14L (1306 aa).

One can recognise a Kinesin motor domain in the interval 142–456 (NVKVFCRSRP…LSFSARAKNA (315 aa)). ATP is bound at residue 223 to 230 (GQSRSGKT). 2 coiled-coil regions span residues 466-507 (IKKW…ANDQ) and 540-595 (HRIE…ALNS). Polar residues-rich tracts occupy residues 592 to 611 (ALNSSDARSTIGSESASVIS) and 660 to 677 (LGSSPQAPSPSNKQTNAQ). Disordered regions lie at residues 592 to 627 (ALNSSDARSTIGSESASVISTPKMMESTADSSSVTK), 657 to 710 (KSGL…SGAI), and 849 to 881 (KSHTSRSRSSSRGSSPGRSPVHHHHDHGSRTSL). The span at 855 to 867 (SRSSSRGSSPGRS) shows a compositional bias: low complexity.

It belongs to the TRAFAC class myosin-kinesin ATPase superfamily. Kinesin family. KIN-14 subfamily.

The protein is Kinesin-like protein KIN-14L of Oryza sativa subsp. japonica (Rice).